The following is a 341-amino-acid chain: MAGKDRKTIEKNYPGAEVDEGGRFKPLPPADDDAKLLVCEYPSLGVIRLDYDYPPALGDIDHPGSFYYDVFYRVVPGLTFGMCQKGEMPDEIKQRFIDAIKWLDAQGVAGITSDCGFFMNFQDLARTVTDKPVFMSSLCQLPAVVCAYAAHEHIALFTANGESLKPMRDLIKKECGVDPEESRFIIVGCQDVPGFEAVANGDRVDVDSVMPHIVRLAKETVAKYADTAKPIRAILFECTELPPYSDAVRAATRLPVFDAITSCNSFLAALMDNPRFGVNNWHLSWDGSQTDYRYGDNLSADLKAKLVNAEHAENVAAAERKLAKDRQKPKPATGTGTAFDA.

2 stretches are compositionally biased toward basic and acidic residues: residues 1-10 (MAGKDRKTIE) and 319-328 (ERKLAKDRQK). Disordered regions lie at residues 1–24 (MAGKDRKTIEKNYPGAEVDEGGRF) and 319–341 (ERKLAKDRQKPKPATGTGTAFDA).

The protein belongs to the aspartate/glutamate racemases family. ALMA1 subfamily. In terms of assembly, homotetramer.

It carries out the reaction S,S-dimethyl-beta-propiothetin = acrylate + dimethyl sulfide + H(+). In terms of biological role, mediates cleavage of dimethylsulfoniopropionate (DMSP) into dimethyl sulfide (DMS) and acrylate. DMS is the principal form by which sulfur is transported from oceans to the atmosphere and is a key component of the ocean sulfur cycle. This is Dimethylsulfoniopropionate lyase 7 from Emiliania huxleyi (strain CCMP1516).